A 228-amino-acid chain; its full sequence is C-type lectin domain-containing protein 88 (228 aa).

An N-terminal signal peptide occupies residues 1-18; it reads MQFIFFGTLFSGLLLVCA. O-linked (Xyl...) (chondroitin sulfate) serine glycosylation occurs at Ser-27. The C-type lectin domain maps to 88–218; that stretch reads YSDSCYWVET…CTYLFYSICE (131 aa). Disulfide bonds link Cys-109-Cys-217 and Cys-188-Cys-209. Asn-220 carries an N-linked (GlcNAc...) asparagine glycan.

This chain is C-type lectin domain-containing protein 88, found in Caenorhabditis elegans.